The sequence spans 426 residues: Ornithine aminotransferase (426 aa).

An N6-(pyridoxal phosphate)lysine modification is found at K291.

Belongs to the class-III pyridoxal-phosphate-dependent aminotransferase family. Pyridoxal 5'-phosphate serves as cofactor.

It carries out the reaction a 2-oxocarboxylate + L-ornithine = L-glutamate 5-semialdehyde + an L-alpha-amino acid. The protein operates within amino-acid biosynthesis; L-proline biosynthesis; L-glutamate 5-semialdehyde from L-ornithine: step 1/1. The sequence is that of Ornithine aminotransferase from Vigna aconitifolia (Moth bean).